A 1854-amino-acid polypeptide reads, in one-letter code: PKS-NRPS hybrid synthetase ATPKS (1854 aa).

Residues 24–423 are adenylation (A) domain; sequence FDQTQTRYSP…GRADTQIKIR (400 aa). Residues 523–598 form the Carrier 1 domain; sequence IPASTLTQQL…NLAAYLSDQT (76 aa). Ser-558 is subject to O-(pantetheine 4'-phosphoryl)serine. Positions 617–1049 constitute a Ketosynthase family 3 (KS3) domain; the sequence is GEDIAVISMA…GTNAHAIIEE (433 aa). Catalysis depends on for beta-ketoacyl synthase activity residues Cys-791, His-926, and His-967. The interval 1162–1496 is malonyl-CoA:ACP transacylase (MAT) domain; the sequence is LFSGQGTERA…SLSDLHIRKV (335 aa). Positions 1536–1556 are disordered; it reads KSSGQPSGQSPSGCPQPTGQI. A compositionally biased stretch (low complexity) spans 1537-1555; it reads SSGQPSGQSPSGCPQPTGQ. In terms of domain architecture, Carrier 2 spans 1776–1851; that stretch reads MMLQGLVRGI…SLSDALQKQV (76 aa). Ser-1811 is modified (O-(pantetheine 4'-phosphoryl)serine).

This sequence in the C-terminal section; belongs to the NRP synthetase family.

It participates in secondary metabolite biosynthesis. In terms of biological role, PKS-NRPS hybrid synthetase; part of the gene cluster that mediates the biosynthesis of pyrophen and campyrone B, which represent a class of fungal amino acid-derived alpha-pyrone natural products. The first step of pyrophen biosynthesis is catalyzed by the PKS-NRPS hybrid synthetase ATPKS that uptakes and condensates L-phenylalanine and malonyl-CoA in order to produce desmethyldesacetylpyrophen. Although the A domain does not discriminate between 2 enantiomeric phenylalanines, the downstream KS domain must play a gate keeping role to stereoselectively accept the L-phenylalanyl-S-phosphopantetheine (Ppant)-T domain intermediate for chain elongation. The resulting amino acid derived diketide is off-loaded through lactonization to yield the alpha-pyrone intermediate desmethyldesacetylpyrophen. The cluster-specific O-methyltransferase (OMT) then methylates desmethyldesacetylpyrophen to desacetylpyrophen, which is further acetylated to pyrophen by an endogenous yet unidentified N-acetyltransferase. ATPKS has relaxed substrate specificity to activate and extend branched-chain amino acid L-leucine to produce small amounts of campyrone B. This Aspergillus niger (strain ATCC 1015 / CBS 113.46 / FGSC A1144 / LSHB Ac4 / NCTC 3858a / NRRL 328 / USDA 3528.7) protein is PKS-NRPS hybrid synthetase ATPKS.